Here is a 450-residue protein sequence, read N- to C-terminus: Putative receptor-like protein kinase At1g72540 (450 aa).

The residue at position 73 (threonine 73) is a Phosphothreonine. The 282-residue stretch at 84–365 (FSKYNFLGEG…TVVKTLEPIL (282 aa)) folds into the Protein kinase domain. Residues 90-98 (LGEGGFGEV) and lysine 119 contribute to the ATP site. Tyrosine 164 is modified (phosphotyrosine). Residue aspartate 214 is the Proton acceptor of the active site. Serine 218 carries the phosphoserine modification. Threonine 254 carries the phosphothreonine modification. Tyrosine 262 carries the post-translational modification Phosphotyrosine.

The protein belongs to the protein kinase superfamily. Ser/Thr protein kinase family.

The catalysed reaction is L-seryl-[protein] + ATP = O-phospho-L-seryl-[protein] + ADP + H(+). The enzyme catalyses L-threonyl-[protein] + ATP = O-phospho-L-threonyl-[protein] + ADP + H(+). The protein is Putative receptor-like protein kinase At1g72540 of Arabidopsis thaliana (Mouse-ear cress).